Here is a 261-residue protein sequence, read N- to C-terminus: MIVKTRAVILREIKYRDQSKICSIYTREFGKMSIIIKGARNPKNRLSGLFSAGNVVDLVLYKKSSRDIQLATDGNLVLSPMVPEPDLERFAILYRIIDFVRHTTENDEKNLPLFTLLTGTLEQLYHTNVNFQQLYAWFLLRFVSLLGFQPSLRTCVFSGEELLPAIEALQLTELYFVMNPGGLALPKAAGSSLAKKQLIPVRLAMLLSALAATRLPAGDSIKADPREIEDLWNLLQEYCSLHLEHARGRKNLDIVSQILLK.

The protein belongs to the RecO family.

Involved in DNA repair and RecF pathway recombination. This chain is DNA repair protein RecO, found in Pelodictyon phaeoclathratiforme (strain DSM 5477 / BU-1).